A 231-amino-acid chain; its full sequence is 7-cyano-7-deazaguanine synthase (231 aa).

8–18 (FSGGQDSTTCL) contacts ATP. 4 residues coordinate Zn(2+): Cys188, Cys197, Cys200, and Cys203.

It belongs to the QueC family. The cofactor is Zn(2+).

The enzyme catalyses 7-carboxy-7-deazaguanine + NH4(+) + ATP = 7-cyano-7-deazaguanine + ADP + phosphate + H2O + H(+). The protein operates within purine metabolism; 7-cyano-7-deazaguanine biosynthesis. Its function is as follows. Catalyzes the ATP-dependent conversion of 7-carboxy-7-deazaguanine (CDG) to 7-cyano-7-deazaguanine (preQ(0)). The sequence is that of 7-cyano-7-deazaguanine synthase from Escherichia coli (strain SMS-3-5 / SECEC).